We begin with the raw amino-acid sequence, 171 residues long: Large ribosomal subunit protein bL9 (171 aa).

Belongs to the bacterial ribosomal protein bL9 family.

Functionally, binds to the 23S rRNA. The protein is Large ribosomal subunit protein bL9 of Rickettsia peacockii (strain Rustic).